The chain runs to 236 residues: 7-cyano-7-deazaguanine synthase (236 aa).

Position 7-17 (7-17 (CSGGLDSVSLA)) interacts with ATP. 4 residues coordinate Zn(2+): Cys-185, Cys-193, Cys-196, and Cys-199.

This sequence belongs to the QueC family. Requires Zn(2+) as cofactor.

The enzyme catalyses 7-carboxy-7-deazaguanine + NH4(+) + ATP = 7-cyano-7-deazaguanine + ADP + phosphate + H2O + H(+). The protein operates within purine metabolism; 7-cyano-7-deazaguanine biosynthesis. Its function is as follows. Catalyzes the ATP-dependent conversion of 7-carboxy-7-deazaguanine (CDG) to 7-cyano-7-deazaguanine (preQ(0)). The sequence is that of 7-cyano-7-deazaguanine synthase from Agrobacterium fabrum (strain C58 / ATCC 33970) (Agrobacterium tumefaciens (strain C58)).